The primary structure comprises 205 residues: GTP cyclohydrolase-2 (205 aa).

A GTP-binding site is contributed by 49-53 (RLHSE). Residues Cys54, Cys65, and Cys67 each contribute to the Zn(2+) site. GTP contacts are provided by residues Gln70, 92 to 94 (EGR), and Thr114. Asp126 functions as the Proton acceptor in the catalytic mechanism. Arg128 serves as the catalytic Nucleophile. Residues Thr149 and Lys154 each contribute to the GTP site.

The protein belongs to the GTP cyclohydrolase II family. It depends on Zn(2+) as a cofactor.

The enzyme catalyses GTP + 4 H2O = 2,5-diamino-6-hydroxy-4-(5-phosphoribosylamino)-pyrimidine + formate + 2 phosphate + 3 H(+). Its pathway is cofactor biosynthesis; riboflavin biosynthesis; 5-amino-6-(D-ribitylamino)uracil from GTP: step 1/4. Functionally, catalyzes the conversion of GTP to 2,5-diamino-6-ribosylamino-4(3H)-pyrimidinone 5'-phosphate (DARP), formate and pyrophosphate. The sequence is that of GTP cyclohydrolase-2 from Pseudomonas entomophila (strain L48).